Consider the following 117-residue polypeptide: Photosystem II reaction center Psb28 protein (117 aa).

The protein belongs to the Psb28 family. As to quaternary structure, part of the photosystem II complex.

Its subcellular location is the cellular thylakoid membrane. In Prochlorococcus marinus subsp. pastoris (strain CCMP1986 / NIES-2087 / MED4), this protein is Photosystem II reaction center Psb28 protein.